Consider the following 545-residue polypeptide: La-related protein 6B (545 aa).

Over residues 1–10 the composition is skewed to polar residues; that stretch reads MADQQTLDSS. 3 disordered regions span residues 1–76, 105–187, and 382–545; these read MADQ…IPPP, LVPV…DSKT, and HQTK…VQAE. A compositionally biased stretch (low complexity) spans 23–49; sequence SHSTSSTTSASSSSDPSLLRSLSLSRL. Over residues 61 to 76 the composition is skewed to pro residues; the sequence is TTPPLPQPPRMIIPPP. A compositionally biased stretch (basic residues) spans 111–126; sequence HHPHHRFHQHHHHNRH. The segment covering 154-173 has biased composition (basic and acidic residues); sequence LVSKKNDRRDHSKRESKNDQ. A compositionally biased stretch (polar residues) spans 174 to 185; it reads VTETGASVSIDS. Residues 187 to 278 enclose the HTH La-type RNA-binding domain; the sequence is TGLPEDSIQK…RRISPITESA (92 aa). In terms of domain architecture, RRM spans 285-383; it reads RIIVAENLPE…LKVRLMLKHQ (99 aa). Positions 448–464 are enriched in basic residues; sequence GQRKGRNRGRGKGRGRG. Low complexity predominate over residues 465–478; that stretch reads QPHQNQNQNNNHSH. Residues 479 to 497 are compositionally biased toward basic residues; it reads NQNHNHNGRGNHHHHHHHQ. The segment covering 498–509 has biased composition (polar residues); sequence VGTQPSNNPMNN. A compositionally biased stretch (low complexity) spans 510 to 519; the sequence is MEQPGMGKQQ.

It localises to the nucleus. Its function is as follows. Transcriptional regulator. The chain is La-related protein 6B (LARP6B) from Arabidopsis thaliana (Mouse-ear cress).